The following is a 93-amino-acid chain: Guanine nucleotide-binding protein subunit gamma 1 (93 aa).

A coiled-coil region spans residues 12–52 (TRGRHRIQAELKKLEQEARFLEEELEELDKTDKVSAALQEL). Residues 20-93 (AELKKLEQEA…DLRRCKCWFL (74 aa)) enclose the G protein gamma domain. Residue Cys-88 is the site of S-palmitoyl cysteine attachment. Cys-90 bears the Cysteine methyl ester mark. Cys-90 is lipidated: S-farnesyl cysteine. A propeptide spans 91–93 (WFL) (removed in mature form).

In terms of assembly, g proteins are composed of 3 units, alpha, beta and gamma. Interacts with the beta subunit RGB1.

It is found in the cell membrane. Its function is as follows. Guanine nucleotide-binding proteins (G proteins) are involved as modulators or transducers in various transmembrane signaling systems. This chain is Guanine nucleotide-binding protein subunit gamma 1, found in Oryza sativa subsp. indica (Rice).